We begin with the raw amino-acid sequence, 48 residues long: uncharacterized protein (48 aa).

This is an uncharacterized protein from Saccharomyces cerevisiae (strain ATCC 204508 / S288c) (Baker's yeast).